A 244-amino-acid chain; its full sequence is Carboxy-S-adenosyl-L-methionine synthase (244 aa).

Residues tyrosine 41, 66-68, 91-92, asparagine 134, and arginine 201 contribute to the S-adenosyl-L-methionine site; these read GCS and DN.

This sequence belongs to the class I-like SAM-binding methyltransferase superfamily. Cx-SAM synthase family. Homodimer.

The catalysed reaction is prephenate + S-adenosyl-L-methionine = carboxy-S-adenosyl-L-methionine + 3-phenylpyruvate + H2O. Catalyzes the conversion of S-adenosyl-L-methionine (SAM) to carboxy-S-adenosyl-L-methionine (Cx-SAM). The polypeptide is Carboxy-S-adenosyl-L-methionine synthase (Colwellia psychrerythraea (strain 34H / ATCC BAA-681) (Vibrio psychroerythus)).